The primary structure comprises 571 residues: Proline--tRNA ligase (571 aa).

This sequence belongs to the class-II aminoacyl-tRNA synthetase family. ProS type 1 subfamily. In terms of assembly, homodimer.

Its subcellular location is the cytoplasm. The catalysed reaction is tRNA(Pro) + L-proline + ATP = L-prolyl-tRNA(Pro) + AMP + diphosphate. Functionally, catalyzes the attachment of proline to tRNA(Pro) in a two-step reaction: proline is first activated by ATP to form Pro-AMP and then transferred to the acceptor end of tRNA(Pro). As ProRS can inadvertently accommodate and process non-cognate amino acids such as alanine and cysteine, to avoid such errors it has two additional distinct editing activities against alanine. One activity is designated as 'pretransfer' editing and involves the tRNA(Pro)-independent hydrolysis of activated Ala-AMP. The other activity is designated 'posttransfer' editing and involves deacylation of mischarged Ala-tRNA(Pro). The misacylated Cys-tRNA(Pro) is not edited by ProRS. This Mannheimia succiniciproducens (strain KCTC 0769BP / MBEL55E) protein is Proline--tRNA ligase.